Consider the following 165-residue polypeptide: PTS system glucose-specific EIIA component (165 aa).

The 105-residue stretch at 33-137 folds into the PTS EIIA type-1 domain; that stretch reads DPVFAGRMMG…STITPIVITN (105 aa). The Zn(2+) site is built by His-70 and His-85. His-85 acts as the Tele-phosphohistidine intermediate; for EIIA activity in catalysis. At His-85 the chain carries Phosphohistidine; by HPr.

In terms of assembly, heterodimer with glycerol kinase (glpk). It depends on Zn(2+) as a cofactor.

The protein resides in the cytoplasm. Functionally, the phosphoenolpyruvate-dependent sugar phosphotransferase system (sugar PTS), a major carbohydrate active transport system, catalyzes the phosphorylation of incoming sugar substrates concomitantly with their translocation across the cell membrane. The enzyme II complex composed of PtsG and Crr is involved in glucose transport. The chain is PTS system glucose-specific EIIA component (crr) from Bacillus anthracis.